The following is a 284-amino-acid chain: MPELPEVETVRRGLELVTLKQPIVDVEVLLARSIALPKEPQAFIEHLRDRAIEQWQRRGKYLLATLDDGSRLVIHLRMSGQLLWLTTPQPPCPHTRVRWFFPTRAELRFVDQRTFGRCWWLPPDCRVAEAIPALATLAPEPLSEAFTVAFLAARLAHCRRSIKTALLDQSIVAGMGNIYADESLFLSGLHPTQSAHTLTPEQVQRLHGVICQVLREGIAAGGTTIRTFMSPAGVNGHYGGQAWVYGRKGEACRVCGTTIERLRLAGRSSHYCPQCQPLSSAIGK.

Residue P2 is the Schiff-base intermediate with DNA of the active site. Residue E3 is the Proton donor of the active site. The active-site Proton donor; for beta-elimination activity is the K60. DNA-binding residues include H94 and R113. An FPG-type zinc finger spans residues 243–277; the sequence is WVYGRKGEACRVCGTTIERLRLAGRSSHYCPQCQP. Catalysis depends on R267, which acts as the Proton donor; for delta-elimination activity.

Belongs to the FPG family. Monomer. Requires Zn(2+) as cofactor.

It carries out the reaction Hydrolysis of DNA containing ring-opened 7-methylguanine residues, releasing 2,6-diamino-4-hydroxy-5-(N-methyl)formamidopyrimidine.. The enzyme catalyses 2'-deoxyribonucleotide-(2'-deoxyribose 5'-phosphate)-2'-deoxyribonucleotide-DNA = a 3'-end 2'-deoxyribonucleotide-(2,3-dehydro-2,3-deoxyribose 5'-phosphate)-DNA + a 5'-end 5'-phospho-2'-deoxyribonucleoside-DNA + H(+). In terms of biological role, involved in base excision repair of DNA damaged by oxidation or by mutagenic agents. Acts as a DNA glycosylase that recognizes and removes damaged bases. Has a preference for oxidized purines, such as 7,8-dihydro-8-oxoguanine (8-oxoG). Has AP (apurinic/apyrimidinic) lyase activity and introduces nicks in the DNA strand. Cleaves the DNA backbone by beta-delta elimination to generate a single-strand break at the site of the removed base with both 3'- and 5'-phosphates. This chain is Formamidopyrimidine-DNA glycosylase (mutM), found in Thermosynechococcus vestitus (strain NIES-2133 / IAM M-273 / BP-1).